Here is a 148-residue protein sequence, read N- to C-terminus: Snaclec crotocetin (148 aa).

The N-terminal stretch at 1–23 (MGRLVFVSFGLLVVFLSLTGTGA) is a signal peptide. Disulfide bonds link C27–C38, C55–C144, and C121–C136. Residues 34–145 (YEGHCYKVFK…CSKTHKVVCK (112 aa)) form the C-type lectin domain.

This sequence belongs to the snaclec family. As to quaternary structure, heterodimer; disulfide-linked. In terms of tissue distribution, expressed by the venom gland.

It is found in the secreted. Interferes with one step of hemostasis (modulation of platelet aggregation, or coagulation cascade, for example). In Crotalus durissus terrificus (South American rattlesnake), this protein is Snaclec crotocetin.